The chain runs to 338 residues: Acyl-CoA Delta(11) desaturase (338 aa).

2 helical membrane passes run 33–53 (IVYF…YGLY) and 61–81 (WATV…VTAG). Positions 83–88 (HRLWSH) match the Histidine box-1 motif. Residues 97–117 (LQILLMVMNSLAFQNTVIDWV) form a helical membrane-spanning segment. The Histidine box-2 motif lies at 120–124 (HRLHH). The next 2 helical transmembrane spans lie at 181–201 (AIPF…VYGW) and 212–234 (AMLR…HIYG). A Histidine box-3 motif is present at residues 260–264 (HNYHH). A disordered region spans residues 318–338 (TNLWGLEDVDTPEDLKNTKGE).

This sequence belongs to the fatty acid desaturase type 1 family. Requires Fe cation as cofactor. Detected in the pheromone gland.

It is found in the membrane. It carries out the reaction an 11,12-saturated fatty acyl-CoA + 2 Fe(II)-[cytochrome b5] + O2 + 2 H(+) = an (11Z)-Delta(11)-fatty acyl-CoA + 2 Fe(III)-[cytochrome b5] + 2 H2O. In terms of biological role, catalyzes the formation of delta(11) fatty acyl precursors in the pheromone gland, and has high activity towards palmitic acid and stearic acid. This Spodoptera littoralis (Egyptian cotton leafworm) protein is Acyl-CoA Delta(11) desaturase.